A 377-amino-acid polypeptide reads, in one-letter code: Flagellar P-ring protein (377 aa).

The signal sequence occupies residues Met1–Ala33.

It belongs to the FlgI family. As to quaternary structure, the basal body constitutes a major portion of the flagellar organelle and consists of four rings (L,P,S, and M) mounted on a central rod.

It is found in the periplasm. The protein localises to the bacterial flagellum basal body. Its function is as follows. Assembles around the rod to form the L-ring and probably protects the motor/basal body from shearing forces during rotation. The polypeptide is Flagellar P-ring protein (Nitrosospira multiformis (strain ATCC 25196 / NCIMB 11849 / C 71)).